The chain runs to 276 residues: Stathmin domain-containing protein 1 (276 aa).

Disordered regions lie at residues 1–40 (MGCG…ENCS), 61–106 (VQMG…RERQ), and 226–250 (GFEP…ATLI). Gly2 is lipidated: N-myristoyl glycine. Composition is skewed to polar residues over residues 68–78 (GTISENSPSPS) and 87–100 (DLVT…PQSL). The SLD domain occupies 118–244 (QGIIQSHSKV…GKPLKRKKSK (127 aa)).

In Homo sapiens (Human), this protein is Stathmin domain-containing protein 1 (STMND1).